A 167-amino-acid chain; its full sequence is Putative pre-16S rRNA nuclease (167 aa).

The segment at 1 to 24 (MVLTQHRVPDRPGDPDQDPGRGRR) is disordered. Over residues 7–21 (RVPDRPGDPDQDPGR) the composition is skewed to basic and acidic residues.

The protein belongs to the YqgF nuclease family.

It is found in the cytoplasm. Its function is as follows. Could be a nuclease involved in processing of the 5'-end of pre-16S rRNA. The protein is Putative pre-16S rRNA nuclease of Mycolicibacterium paratuberculosis (strain ATCC BAA-968 / K-10) (Mycobacterium paratuberculosis).